We begin with the raw amino-acid sequence, 153 residues long: D-amino acid oxidase regulator (153 aa).

The involved in targeting to the mitochondrion stretch occupies residues 1-25; sequence MLEKLMGADSLQLFRSRYTLGKIYF. Residues 138-153 form an interaction with DAO region; the sequence is KDQSCNHKEITSTKAE.

As to quaternary structure, interacts with DAO (D-amino acid oxidase); the interaction is direct, can occur in the presence or absence of FAD or substrate bound to DAO, and results in a complex containing two DAO homodimers and two DAOA monomers. Interacts with DDO (D-aspartate oxidase); the interaction is direct. Interacts wih SOD1; the interaction is direct. Interacts with MSRB2; the interaction is direct. Expressed in the amygdala and in astrocytes of the cortex (at protein level). Expressed in the caudate nucleus, spinal cord and testis.

The protein localises to the cytoplasm. The protein resides in the cytosol. Its subcellular location is the golgi apparatus. It localises to the mitochondrion. Its function is as follows. May suppress DAO (D-amino acid oxidase) and SOD1 activity and promote their degradation. Has conversely also been suggested to function as a DAO activator. May stimulate the degradation of DDO (D-aspartate oxidase). May play a role in mitochondrial fission. This is D-amino acid oxidase regulator (DAOA) from Homo sapiens (Human).